Reading from the N-terminus, the 160-residue chain is Ribosomal RNA large subunit methyltransferase H (160 aa).

S-adenosyl-L-methionine is bound by residues Leu76, Gly108, and 127-132 (LGKMTW).

The protein belongs to the RNA methyltransferase RlmH family. As to quaternary structure, homodimer.

Its subcellular location is the cytoplasm. The enzyme catalyses pseudouridine(1915) in 23S rRNA + S-adenosyl-L-methionine = N(3)-methylpseudouridine(1915) in 23S rRNA + S-adenosyl-L-homocysteine + H(+). In terms of biological role, specifically methylates the pseudouridine at position 1915 (m3Psi1915) in 23S rRNA. In Rhizobium meliloti (strain 1021) (Ensifer meliloti), this protein is Ribosomal RNA large subunit methyltransferase H.